Reading from the N-terminus, the 946-residue chain is Bifunctional glutamine synthetase adenylyltransferase/adenylyl-removing enzyme (946 aa).

The adenylyl removase stretch occupies residues 1 to 440; it reads MKPLSSPLQQ…VFNELIGDDE (440 aa). Positions 449 to 946 are adenylyl transferase; that stretch reads SEQWRELWQD…ASWQKWLVEE (498 aa).

This sequence belongs to the GlnE family. Requires Mg(2+) as cofactor.

It carries out the reaction [glutamine synthetase]-O(4)-(5'-adenylyl)-L-tyrosine + phosphate = [glutamine synthetase]-L-tyrosine + ADP. It catalyses the reaction [glutamine synthetase]-L-tyrosine + ATP = [glutamine synthetase]-O(4)-(5'-adenylyl)-L-tyrosine + diphosphate. In terms of biological role, involved in the regulation of glutamine synthetase GlnA, a key enzyme in the process to assimilate ammonia. When cellular nitrogen levels are high, the C-terminal adenylyl transferase (AT) inactivates GlnA by covalent transfer of an adenylyl group from ATP to specific tyrosine residue of GlnA, thus reducing its activity. Conversely, when nitrogen levels are low, the N-terminal adenylyl removase (AR) activates GlnA by removing the adenylyl group by phosphorolysis, increasing its activity. The regulatory region of GlnE binds the signal transduction protein PII (GlnB) which indicates the nitrogen status of the cell. The polypeptide is Bifunctional glutamine synthetase adenylyltransferase/adenylyl-removing enzyme (Shigella boydii serotype 18 (strain CDC 3083-94 / BS512)).